Consider the following 722-residue polypeptide: Polyribonucleotide nucleotidyltransferase (722 aa).

Positions 495 and 501 each coordinate Mg(2+). In terms of domain architecture, KH spans 562–621 (PRLLSFRIDPELIGTVIGPGGRTIKGITERTNTKIDIEDGGIVTIASHDGVAAEEAQKII). Residues 631 to 699 (GEIFTGSITR…NRGRINLTLR (69 aa)) enclose the S1 motif domain. Positions 701–711 (VSQNNNDMNYP) are enriched in polar residues. Residues 701–722 (VSQNNNDMNYPQPTPTPVAPLN) form a disordered region. Pro residues predominate over residues 712 to 722 (QPTPTPVAPLN).

This sequence belongs to the polyribonucleotide nucleotidyltransferase family. Requires Mg(2+) as cofactor.

The protein localises to the cytoplasm. It carries out the reaction RNA(n+1) + phosphate = RNA(n) + a ribonucleoside 5'-diphosphate. Involved in mRNA degradation. Catalyzes the phosphorolysis of single-stranded polyribonucleotides processively in the 3'- to 5'-direction. The chain is Polyribonucleotide nucleotidyltransferase from Prochlorococcus marinus (strain MIT 9211).